The following is a 415-amino-acid chain: DNA polymerase IV (415 aa).

Residues 15–196 (ILHVDMNCFF…LPVGAMHGIG (182 aa)) form the UmuC domain. D19 and D115 together coordinate Mg(2+). E116 is an active-site residue. Residues 238 to 260 (KGMDDRQVDPSQMGQHKSVGNSM) form a disordered region. The span at 246–260 (DPSQMGQHKSVGNSM) shows a compositional bias: polar residues.

The protein belongs to the DNA polymerase type-Y family. In terms of assembly, monomer. The cofactor is Mg(2+).

Its subcellular location is the cytoplasm. The catalysed reaction is DNA(n) + a 2'-deoxyribonucleoside 5'-triphosphate = DNA(n+1) + diphosphate. Its function is as follows. Poorly processive, error-prone DNA polymerase involved in untargeted mutagenesis. Copies undamaged DNA at stalled replication forks, which arise in vivo from mismatched or misaligned primer ends. These misaligned primers can be extended by PolIV. Exhibits no 3'-5' exonuclease (proofreading) activity. May be involved in translesional synthesis, in conjunction with the beta clamp from PolIII. In Bacillus cereus (strain ZK / E33L), this protein is DNA polymerase IV.